Consider the following 140-residue polypeptide: Putative pre-16S rRNA nuclease (140 aa).

Belongs to the YqgF nuclease family.

Its subcellular location is the cytoplasm. Its function is as follows. Could be a nuclease involved in processing of the 5'-end of pre-16S rRNA. This Yersinia pseudotuberculosis serotype O:1b (strain IP 31758) protein is Putative pre-16S rRNA nuclease.